A 515-amino-acid chain; its full sequence is WUSCHEL-related homeobox 12 (515 aa).

2 stretches are compositionally biased toward polar residues: residues Gln23–Gly32 and Thr44–Ser57. 3 disordered regions span residues Gln23–Arg76, Asn130–Thr156, and Leu176–Lys195. Basic and acidic residues predominate over residues Glu62–Pro71. Residues Glu68–Leu132 constitute a DNA-binding region (homeobox; WUS-type). A compositionally biased stretch (basic residues) spans Asn130–Arg143. Low complexity-rich tracts occupy residues Ala144–Thr156 and Leu177–Lys195.

The protein belongs to the WUS homeobox family.

It is found in the nucleus. Functionally, transcription factor which may be involved in developmental processes. The protein is WUSCHEL-related homeobox 12 (WOX12) of Oryza sativa subsp. japonica (Rice).